Reading from the N-terminus, the 437-residue chain is 3-phosphoshikimate 1-carboxyvinyltransferase (437 aa).

Residues K22, S23, and R27 each coordinate 3-phosphoshikimate. K22 is a binding site for phosphoenolpyruvate. G96 and R125 together coordinate phosphoenolpyruvate. 3-phosphoshikimate-binding residues include S170, Q172, D323, and K350. Q172 contributes to the phosphoenolpyruvate binding site. D323 (proton acceptor) is an active-site residue. Phosphoenolpyruvate contacts are provided by R354 and R396.

This sequence belongs to the EPSP synthase family. As to quaternary structure, monomer.

The protein localises to the cytoplasm. It catalyses the reaction 3-phosphoshikimate + phosphoenolpyruvate = 5-O-(1-carboxyvinyl)-3-phosphoshikimate + phosphate. It participates in metabolic intermediate biosynthesis; chorismate biosynthesis; chorismate from D-erythrose 4-phosphate and phosphoenolpyruvate: step 6/7. Its function is as follows. Catalyzes the transfer of the enolpyruvyl moiety of phosphoenolpyruvate (PEP) to the 5-hydroxyl of shikimate-3-phosphate (S3P) to produce enolpyruvyl shikimate-3-phosphate and inorganic phosphate. The sequence is that of 3-phosphoshikimate 1-carboxyvinyltransferase from Synechococcus sp. (strain RCC307).